Consider the following 1266-residue polypeptide: Phosphatidylinositol 3,4,5-trisphosphate 5-phosphatase 2A (1266 aa).

In terms of domain architecture, SH2 spans 15-111 (WMHRDLSRAA…GLVTTLLYPV (97 aa)). Positions 114–123 (EETTEDRDYS) are enriched in basic and acidic residues. 2 disordered regions span residues 114–159 (EETT…NVTA) and 879–951 (DMGG…DATT). The segment covering 136–159 (TASTSSMTGSALVSTDTPPENVTA) has biased composition (polar residues). Composition is skewed to basic and acidic residues over residues 915-924 (RVSEEGEKSS) and 931-944 (TKEENTHNRGKQDP). The NPXY motif motif lies at 958–961 (NPAY). The residue at position 961 (Tyr961) is a Phosphotyrosine. Disordered stretches follow at residues 986 to 1132 (PLAN…SALD) and 1147 to 1174 (EVEYPSGRERGASQGPTGPQLRGLSFPS). Positions 994 to 1012 (PPAGSVGKSKPPSGSSAQG) are enriched in low complexity. Positions 1045–1056 (RPPPDFPPPPLP) are enriched in pro residues. The region spanning 1203–1266 (SVDCSVGEWL…LLASLKQQQK (64 aa)) is the SAM domain.

It belongs to the inositol 1,4,5-trisphosphate 5-phosphatase family. In terms of processing, tyrosine phosphorylated by the members of the SRC family after exposure to a diverse array of extracellular stimuli.

The protein localises to the cytoplasm. It is found in the cytosol. It localises to the cytoskeleton. The protein resides in the membrane. Its subcellular location is the cell projection. The protein localises to the filopodium. It is found in the lamellipodium. It localises to the nucleus. The protein resides in the nucleus speckle. It catalyses the reaction a 1,2-diacyl-sn-glycero-3-phospho-(1D-myo-inositol-3,4,5-trisphosphate) + H2O = a 1,2-diacyl-sn-glycero-3-phospho-(1D-myo-inositol-3,4-bisphosphate) + phosphate. Phosphatidylinositol (PtdIns) phosphatase that specifically hydrolyzes the 5-phosphate of phosphatidylinositol-3,4,5-trisphosphate (PtdIns(3,4,5)P3) to produce PtdIns(3,4)P2, thereby negatively regulating the PI3K (phosphoinositide 3-kinase) pathways. Plays a central role in regulation of PI3K-dependent insulin signaling, although the precise molecular mechanisms and signaling pathways remain unclear. Part of a signaling pathway that regulates actin cytoskeleton remodeling. Required for the maintenance and dynamic remodeling of actin structures as well as in endocytosis, having a major impact on ligand-induced EGFR internalization and degradation. Participates in regulation of cortical and submembraneous actin. Regulates cell adhesion and cell spreading. Acts as a negative regulator of the FC-gamma-RIIA receptor (FCGR2A). Mediates signaling from the FC-gamma-RIIB receptor (FCGR2B), playing a central role in terminating signal transduction from activating immune/hematopoietic cell receptor systems. May also hydrolyze PtdIns(1,3,4,5)P4, and could thus affect the levels of the higher inositol polyphosphates like InsP6. This chain is Phosphatidylinositol 3,4,5-trisphosphate 5-phosphatase 2A (inppl1a), found in Danio rerio (Zebrafish).